Reading from the N-terminus, the 638-residue chain is CTTNBP2 N-terminal-like protein (638 aa).

Residues 87 to 284 (MKQCKNMQER…KDLEAAQQHR (198 aa)) are a coiled coil. Disordered stretches follow at residues 280 to 303 (AQQH…TATE), 360 to 430 (RELT…PCSS), 463 to 490 (RHKF…LSPT), and 514 to 621 (NQGP…CSPS). S285 is modified (phosphoserine). The segment covering 360–371 (RELTSDSSTENQ) has biased composition (polar residues). 2 stretches are compositionally biased toward low complexity: residues 401–430 (TMPS…PCSS) and 467–477 (QSQADQDQQAS). 7 positions are modified to phosphoserine: S481, S488, S522, S526, S559, S562, and S567. A compositionally biased stretch (polar residues) spans 514 to 528 (NQGPIKPVSPNSSPF). A phosphothreonine mark is found at T569 and T589. Residues 589–620 (TPSQSATTPVTKTHSQASSLAATEDLASSCSP) are compositionally biased toward polar residues. S591 carries the phosphoserine modification.

In terms of assembly, interacts with CTTN/cortactin; this interaction may redistribute CTTN to stress fibers. May form homomers. Associates with the core of STRIPAK complexes composed of PP2A catalytic and scaffolding subunits, the striatins (PP2A regulatory subunits), the striatin-associated proteins MOB4, STRIP1 and STRIP2, PDCD10 and members of the STE20 kinases, such as STK24 and STK26. Predominantly expressed in skin, also detectable in spleen and lung (at protein level). Very low levels, if any, in brain (at protein level).

Its subcellular location is the cell projection. It localises to the lamellipodium. The protein localises to the cytoplasm. The protein resides in the cytoskeleton. It is found in the stress fiber. Functionally, regulates lamellipodial actin dynamics in a CTTN-dependent manner. Associates with core striatin-interacting phosphatase and kinase (STRIPAK) complex to form CTTNBP2NL-STRIPAK complexes. STRIPAK complexes have critical roles in protein (de)phosphorylation and are regulators of multiple signaling pathways including Hippo, MAPK, nuclear receptor and cytoskeleton remodeling. Different types of STRIPAK complexes are involved in a variety of biological processes such as cell growth, differentiation, apoptosis, metabolism and immune regulation. The sequence is that of CTTNBP2 N-terminal-like protein (Cttnbp2nl) from Mus musculus (Mouse).